The chain runs to 209 residues: Orotate phosphoribosyltransferase (209 aa).

Residues Arg-96, Lys-100, His-102, and 122–130 (EDLISTGGS) each bind 5-phospho-alpha-D-ribose 1-diphosphate. Residue Ser-126 coordinates orotate.

The protein belongs to the purine/pyrimidine phosphoribosyltransferase family. PyrE subfamily. In terms of assembly, homodimer. Requires Mg(2+) as cofactor.

It catalyses the reaction orotidine 5'-phosphate + diphosphate = orotate + 5-phospho-alpha-D-ribose 1-diphosphate. The protein operates within pyrimidine metabolism; UMP biosynthesis via de novo pathway; UMP from orotate: step 1/2. In terms of biological role, catalyzes the transfer of a ribosyl phosphate group from 5-phosphoribose 1-diphosphate to orotate, leading to the formation of orotidine monophosphate (OMP). This Lactococcus lactis subsp. cremoris (strain SK11) protein is Orotate phosphoribosyltransferase.